A 207-amino-acid chain; its full sequence is Small ribosomal subunit protein uS4 (207 aa).

The segment at 26–47 is disordered; sequence AINNKNYKPGQQGNSSSISKPS. A compositionally biased stretch (polar residues) spans 28–39; the sequence is NNKNYKPGQQGN. The region spanning 95-158 is the S4 RNA-binding domain; that stretch reads RRLDAVVYRL…KQIPIVIGAI (64 aa).

The protein belongs to the universal ribosomal protein uS4 family. In terms of assembly, part of the 30S ribosomal subunit. Contacts protein S5. The interaction surface between S4 and S5 is involved in control of translational fidelity.

In terms of biological role, one of the primary rRNA binding proteins, it binds directly to 16S rRNA where it nucleates assembly of the body of the 30S subunit. Functionally, with S5 and S12 plays an important role in translational accuracy. The polypeptide is Small ribosomal subunit protein uS4 (Orientia tsutsugamushi (strain Boryong) (Rickettsia tsutsugamushi)).